Consider the following 242-residue polypeptide: DNA repair protein RecO (242 aa).

The protein belongs to the RecO family.

In terms of biological role, involved in DNA repair and RecF pathway recombination. In Methylococcus capsulatus (strain ATCC 33009 / NCIMB 11132 / Bath), this protein is DNA repair protein RecO.